Reading from the N-terminus, the 215-residue chain is MSKVYDWFEERLEIQAIADDITSKYVPPHVNIFYCLGGITLTCFLVQVATGFAMTFYYRPTVTDAFASVQYIMTEANFGWLIRSVHRWSASMMVLMMILHVFRVYLTGGFKKPRELTWVTGVVLGVLTASFGVTGYSLPRDQIGYWAVKIVTGVPEAIPVIGSPLVELLRGSASVGQSTLTRFYSLHTFVLPLLTAVFMLMHFPMIRKQGISGPL.

The chain crosses the membrane as a helical span at residues I32–F52. C35 contributes to the heme c binding site. H86 and H100 together coordinate heme b. The next 3 helical transmembrane spans lie at A90–F110, L116–Y136, and L186–I206. Residues H187 and H202 each contribute to the heme b site.

The protein belongs to the cytochrome b family. PetB subfamily. The 4 large subunits of the cytochrome b6-f complex are cytochrome b6, subunit IV (17 kDa polypeptide, PetD), cytochrome f and the Rieske protein, while the 4 small subunits are PetG, PetL, PetM and PetN. The complex functions as a dimer. The cofactor is heme b. Heme c is required as a cofactor.

The protein localises to the plastid. Its subcellular location is the chloroplast thylakoid membrane. Component of the cytochrome b6-f complex, which mediates electron transfer between photosystem II (PSII) and photosystem I (PSI), cyclic electron flow around PSI, and state transitions. This is Cytochrome b6 from Lactuca sativa (Garden lettuce).